The chain runs to 320 residues: cUMP-AMP-activated phospholipase (320 aa).

The PNPLA domain maps to 23–204; it reads LALDGGGAKG…CANNPTLFAI (182 aa). Positions 27–32 match the GXGXXG motif; it reads GGGAKG. Positions 59 to 63 match the GXSXG motif; sequence GTSTG. Ser-61 functions as the Nucleophile in the catalytic mechanism. The active-site Proton acceptor is the Asp-191. A DGA/G motif is present at residues 191–193; sequence DGG.

This sequence belongs to the patatin family.

It carries out the reaction a 1,2-diacyl-sn-glycero-3-phosphocholine + H2O = a 2-acyl-sn-glycero-3-phosphocholine + a fatty acid + H(+). With respect to regulation, phospholipase activity is specifically activated upon 3',3'-cUAMP binding. Is not activated by the other cyclic dinucleotides 3',3'-cGAMP, 3',3'-c-diAMP and 3',3'-c-diGMP. Therefore, is specifically activated by only the nucleotide synthesized from its adjacently encoded nucleotidyltransferase (CdnE). Its function is as follows. Effector phospholipase of a CBASS antivirus system. CBASS (cyclic oligonucleotide-based antiphage signaling system) provides immunity against bacteriophage. The CD-NTase protein synthesizes cyclic nucleotides in response to infection; these serve as specific second messenger signals. The signals activate a diverse range of effectors, leading to bacterial cell death and thus abortive phage infection. A type II-A(UA) CBASS system. In terms of biological role, phospholipase that is activated upon binding to the cyclic dinucleotide (CDN) second messenger 3',3'-cyclic UMP-AMP (3',3'-cUAMP). The polypeptide is cUMP-AMP-activated phospholipase (Escherichia coli).